The sequence spans 310 residues: Aspartate carbamoyltransferase catalytic subunit (310 aa).

Carbamoyl phosphate is bound by residues arginine 57 and threonine 58. An L-aspartate-binding site is contributed by lysine 86. The carbamoyl phosphate site is built by arginine 107, histidine 135, and glutamine 138. Residues arginine 168 and arginine 229 each coordinate L-aspartate. Residues leucine 268 and proline 269 each coordinate carbamoyl phosphate.

It belongs to the aspartate/ornithine carbamoyltransferase superfamily. ATCase family. As to quaternary structure, heterooligomer of catalytic and regulatory chains.

The catalysed reaction is carbamoyl phosphate + L-aspartate = N-carbamoyl-L-aspartate + phosphate + H(+). Its pathway is pyrimidine metabolism; UMP biosynthesis via de novo pathway; (S)-dihydroorotate from bicarbonate: step 2/3. In terms of biological role, catalyzes the condensation of carbamoyl phosphate and aspartate to form carbamoyl aspartate and inorganic phosphate, the committed step in the de novo pyrimidine nucleotide biosynthesis pathway. This is Aspartate carbamoyltransferase catalytic subunit from Thermococcus onnurineus (strain NA1).